Consider the following 70-residue polypeptide: Movement protein TGBp3 (70 aa).

Residues 1-6 (MEANTY) lie on the Lumenal side of the membrane. The helical transmembrane segment at 7-27 (LNAIILVLVVTIIAVISTSLV) threads the bilayer. At 28–70 (RTEPCVIKITGESITVLACKLDAETIRAIADLKPLSVERLSFH) the chain is on the cytoplasmic side.

Belongs to the Tymovirales TGBp3 protein family.

Its subcellular location is the host endoplasmic reticulum membrane. Plays a role in viral cell-to-cell propagation, by facilitating genome transport to neighboring plant cells through plasmosdesmata. May induce the formation of granular vesicles derived from the Endoplasmic reticulum, which align on actin filaments. The protein is Movement protein TGBp3 of Potato virus X (PVX).